The primary structure comprises 914 residues: Solute carrier family 12 member 9 (914 aa).

The Cytoplasmic segment spans residues 1–36 (MASESSPLLAYRLLGEEGVALPANGAGGPGGASARK). Serine 6 carries the phosphoserine modification. The chain crosses the membrane as a helical span at residues 37-57 (LSTFLGVVVPTVLSMFSIVVF). Residues 58 to 72 (LRIGFVVGHAGLLQA) are Extracellular-facing. The chain crosses the membrane as a helical span at residues 73 to 93 (LAMLLVAYFILALTVLSVCAI). At 94–119 (ATNGAVQGGGAYFMISRTLGPEVGGS) the chain is on the cytoplasmic side. The chain crosses the membrane as a helical span at residues 120–140 (IGLMFYLANVCGCAVSLLGLV). Residues 141–167 (ESVLDVFGADATGPSGLRVLPQGYGWN) lie on the Extracellular side of the membrane. A helical transmembrane segment spans residues 168–188 (LLYGSLLLGLVGGVCTLGAGL). Topologically, residues 189-193 (YARAS) are cytoplasmic. A helical transmembrane segment spans residues 194 to 214 (FLTFLLVSGSLASVLISFVAV). At 215 to 262 (GPRDIRLTPRPGPNGSSLPPRFGHFTGFNSSTLKDNLGAGYAEDYTTG) the chain is on the extracellular side. Asparagine 228 and asparagine 243 each carry an N-linked (GlcNAc...) asparagine glycan. Residues 263 to 283 (AVMNFASVFAVLFNGCTGIMA) form a helical membrane-spanning segment. Over 284–297 (GANMSGELKDPSRA) the chain is Cytoplasmic. Residues 298–318 (IPLGTIVAVAYTFFVYVLLFF) traverse the membrane as a helical segment. The Extracellular portion of the chain corresponds to 319 to 338 (LSSFTCDRTLLQEDYGFFRA). A helical membrane pass occupies residues 339–359 (ISLWPPLVLIGIYATALSASM). The Cytoplasmic segment spans residues 360–390 (SSLIGASRILHALARDDLFGVILAPAKVVSR). Residues 391-411 (GGNPWAAVLYSWGLVQLVLLA) form a helical membrane-spanning segment. Residues 412–416 (GKLNT) are Extracellular-facing. The helical transmembrane segment at 417–437 (LAAVVTVFYLVAYAAVDLSCL) threads the bilayer. At 438 to 466 (SLEWASAPNFRPTFSLFSWHTCLLGVASC) the chain is on the cytoplasmic side. Residues 467–487 (LLMMFLISPGAAGGSLLLMGL) form a helical membrane-spanning segment. Over 488 to 740 (LAALLTARGG…LLRPRGGPGY (253 aa)) the chain is Extracellular. Positions 642–678 (LTDPAFSEPADSTREGSSPALSTLFPPPRAPGSPRAL) are disordered. A helical transmembrane segment spans residues 741–761 (VDVCGLFLLQMATILGMVPAW). Residues 762–914 (HSARLRIFLC…GVTPVTCTDL (153 aa)) lie on the Cytoplasmic side of the membrane. The interval 844–863 (QQGRGTGGGPGGPEGGDAEG) is disordered. The segment covering 847–858 (RGTGGGPGGPEG) has biased composition (gly residues).

Belongs to the SLC12A transporter family. As to quaternary structure, interacts with SLC12A1. As to expression, highly expressed in placenta, brain and kidney. Lower expression in lung, liver and heart.

It localises to the cell membrane. It is found in the lysosome membrane. Its function is as follows. May be an inhibitor of SLC12A1. Seems to correspond to a subunit of a multimeric transport system and thus, additional subunits may be required for its function. May play a role in lysosomal ion flux and osmoregulation. This chain is Solute carrier family 12 member 9 (SLC12A9), found in Homo sapiens (Human).